Reading from the N-terminus, the 867-residue chain is Putative tyrosine-protein kinase F09A5.2 (867 aa).

2 consecutive transmembrane segments (helical) span residues 45–65 (VMKILSGFSLIIIVVFIFATS) and 355–375 (LLLIIGIPCISLTICCIAFFV). 2 N-linked (GlcNAc...) asparagine glycosylation sites follow: Asn-395 and Asn-423. Positions 467–757 (VQEDHLLGNG…FNEMRGEITV (291 aa)) constitute a Protein kinase domain. ATP is bound at residue 473–481 (LGNGAFANV). 2 N-linked (GlcNAc...) asparagine glycosylation sites follow: Asn-496 and Asn-500. Lys-516 contributes to the ATP binding site. Residue Asn-585 is glycosylated (N-linked (GlcNAc...) asparagine). Asp-626 acts as the Proton acceptor in catalysis. 2 disordered regions span residues 782–821 (LTMQDSKETAPCSTPGGSQDMDEDGDYDSGSEGHSQGTCA) and 848–867 (SKSMRGKRRQSNSTVSTYQS). A compositionally biased stretch (acidic residues) spans 801–810 (DMDEDGDYDS). Residues 858–867 (SNSTVSTYQS) show a composition bias toward polar residues. Residue Asn-859 is glycosylated (N-linked (GlcNAc...) asparagine).

The protein belongs to the protein kinase superfamily. Tyr protein kinase family.

It localises to the membrane. It catalyses the reaction L-tyrosyl-[protein] + ATP = O-phospho-L-tyrosyl-[protein] + ADP + H(+). In Caenorhabditis elegans, this protein is Putative tyrosine-protein kinase F09A5.2.